A 525-amino-acid polypeptide reads, in one-letter code: Calcium uptake protein 1 homolog, mitochondrial (525 aa).

A disordered region spans residues 109–146 (ADAGQRPSSAADVNGEDKSSESESEDSEDEEAGSDLHL). Over residues 130 to 141 (SESEDSEDEEAG) the composition is skewed to acidic residues. 2 EF-hand domains span residues 268–303 (ISRRHFEIAFRMFDLNGDGDVDCEEFEMVATLVRQQ) and 459–494 (LSDHVVDVVFTIFDENNDNQLSNKEFISVMKNRVQR). The Ca(2+) site is built by Asp281, Asn283, Asp285, Asp287, Glu292, Asp472, Asn474, Asp476, Gln478, and Glu483.

The protein belongs to the MICU1 family. MICU1 subfamily.

It is found in the mitochondrion intermembrane space. The protein localises to the mitochondrion inner membrane. Calcium sensor of the mitochondrial calcium uniporter (MCU) channel, which senses calcium level via its EF-hand domains. At low calcium levels, MICU1 occludes the pore of the MCU channel, preventing mitochondrial calcium uptake. At higher calcium levels, calcium-binding to MICU1 induces a conformational change that weakens MCU-MICU1 interactions and moves MICU1 away from the pore, allowing calcium permeation through the MCU channel. Also required to protect against manganese toxicity by preventing manganese uptake by MCU. During development, required in alpha/beta or gamma mushroom body neurons to support olfactory intermediate-term memory in the adult. In Drosophila melanogaster (Fruit fly), this protein is Calcium uptake protein 1 homolog, mitochondrial.